The following is a 422-amino-acid chain: Exopolygalacturonase clone GBGE184 (422 aa).

The N-terminal stretch at 1–31 (MANARSLVAKANNINVGSLILMALVFGSCVA) is a signal peptide. 5 PbH1 repeats span residues 200-226 (TENVNIQNIKLTAPAESPNTDGIHLSN), 227-248 (ADNVSILDSTIATGDDCVSVGR), 250-270 (SNNVTVERVICGPGHGLSVGS), 280-301 (VSGIHVNNCTMIETDNGLRIKT), and 310-331 (AVDIKFENIIMQSVKNPIIIDQ). Residue asparagine 229 is glycosylated (N-linked (GlcNAc...) asparagine). The Proton donor role is filled by aspartate 241. Cysteines 243 and 260 form a disulfide. The N-linked (GlcNAc...) asparagine glycan is linked to asparagine 252. Residue histidine 264 is part of the active site. N-linked (GlcNAc...) asparagine glycosylation occurs at asparagine 287. Intrachain disulfides connect cysteine 366–cysteine 372 and cysteine 404–cysteine 420.

The protein belongs to the glycosyl hydrolase 28 family.

Its subcellular location is the secreted. The protein localises to the cell wall. The catalysed reaction is [(1-&gt;4)-alpha-D-galacturonosyl](n) + H2O = alpha-D-galacturonate + [(1-&gt;4)-alpha-D-galacturonosyl](n-1). May function in depolymerizing pectin during pollen development, germination, and tube growth. Acts as an exo-polygalacturonase. The chain is Exopolygalacturonase clone GBGE184 (PGA3) from Arabidopsis thaliana (Mouse-ear cress).